The primary structure comprises 800 residues: Nucleolar complex protein 3 homolog (800 aa).

Disordered regions lie at residues 27–93 (KLKN…DMMD) and 160–187 (GIIP…RELE). Residues 40–51 (KKYRKEQRKLRQ) are compositionally biased toward basic residues. Positions 66 to 78 (NPKEKRPGKRIER) are enriched in basic and acidic residues. Over residues 79–93 (EEEEEEEALPLDMMD) the composition is skewed to acidic residues. The segment covering 160–174 (GIIPQTREKPVTDSN) has biased composition (basic and acidic residues). Acidic residues predominate over residues 175 to 187 (KDEEDQEEERELE). Lysine 333 is covalently cross-linked (Glycyl lysine isopeptide (Lys-Gly) (interchain with G-Cter in SUMO2)). Residues 451–490 (KEKRKSLSRMQRKWKKAEEKLERELREAEASESTEKKLKL) are a coiled coil. A Phosphoserine modification is found at serine 787.

It belongs to the CBF/MAK21 family. As to expression, expressed in colon, heart, kidney, liver, lung, placenta, skeletal muscle, small intestine, spleen and thymus.

Its subcellular location is the nucleus. It is found in the nucleolus. The protein localises to the nucleus speckle. Functionally, may be required for adipogenesis. This Homo sapiens (Human) protein is Nucleolar complex protein 3 homolog (NOC3L).